The following is a 421-amino-acid chain: Histidine--tRNA ligase (421 aa).

Belongs to the class-II aminoacyl-tRNA synthetase family. As to quaternary structure, homodimer.

It is found in the cytoplasm. The enzyme catalyses tRNA(His) + L-histidine + ATP = L-histidyl-tRNA(His) + AMP + diphosphate + H(+). The chain is Histidine--tRNA ligase from Ureaplasma urealyticum serovar 10 (strain ATCC 33699 / Western).